The following is a 292-amino-acid chain: Ribosomal protein L11 methyltransferase (292 aa).

S-adenosyl-L-methionine-binding residues include Thr144, Gly165, Asp187, and Asn229.

This sequence belongs to the methyltransferase superfamily. PrmA family.

It localises to the cytoplasm. It catalyses the reaction L-lysyl-[protein] + 3 S-adenosyl-L-methionine = N(6),N(6),N(6)-trimethyl-L-lysyl-[protein] + 3 S-adenosyl-L-homocysteine + 3 H(+). Functionally, methylates ribosomal protein L11. The polypeptide is Ribosomal protein L11 methyltransferase (Pseudomonas putida (strain W619)).